A 551-amino-acid polypeptide reads, in one-letter code: MPQKVLITSALPYANGPLHFGHIAGVYLPADVYARFRRLLGDDVLYICGSDEFGIAITLNADREGLGYQEYVDMYHKLHKDTFEKLGFALDFFSRTTNPFHAELVQDFYSQLKASGLIENRISEQLYSEQEQRFLADRYVEGTCPRCGFDHARGDECQSCGADYEAIDLIDPKSKISGVELVKKETEHSYFLLDRMKDALLSFIQGCYLPDHVRKFVVDYIEHVRSRAITRDLSWGIPVPDFPGKVFYVWFDAPIGYISGTMEWAASQGNPDEWKRFWLEDGVEYVQFIGKDNLPFHSVVFPAMELGQKLDYKKVDALVVSEFYLLEGRQFSKSEGNYVDMDKFLSSYSLDKLRYVLAATAPETSDSEFTFLDFKTRCNSELVGKFGNFINRVLAFAEKNHYDKLSYHSVVLEDSDRAFLEEVRQLVRDAEKCYREYSLRKATSVIMSLAALGNVYFNQQAPWKLLKEGTRERVEAILFCACYCQKLLALISYPIIPESAVAIWEMISPKSLENCNLDTMYARDLWKEEILDVINEEFHLKSPRLLFTTVE.

Residues 12–22 (PYANGPLHFGH) carry the 'HIGH' region motif. Residues Cys144, Cys147, Cys157, and Cys160 each contribute to the Zn(2+) site. Residues 330-334 (QFSKS) carry the 'KMSKS' region motif. Lys333 lines the ATP pocket.

This sequence belongs to the class-I aminoacyl-tRNA synthetase family. MetG type 1 subfamily. In terms of assembly, monomer. Zn(2+) is required as a cofactor.

Its subcellular location is the cytoplasm. The enzyme catalyses tRNA(Met) + L-methionine + ATP = L-methionyl-tRNA(Met) + AMP + diphosphate. Its function is as follows. Is required not only for elongation of protein synthesis but also for the initiation of all mRNA translation through initiator tRNA(fMet) aminoacylation. The sequence is that of Methionine--tRNA ligase (metG) from Chlamydia pneumoniae (Chlamydophila pneumoniae).